Reading from the N-terminus, the 288-residue chain is Cell division protein ZipA (288 aa).

A topological domain (periplasmic) is located at residue Met-1. Residues 2–22 traverse the membrane as a helical segment; the sequence is EIGLREWLIVIGIIVIAGILF. The Cytoplasmic segment spans residues 23–288; that stretch reads DGWRRMRGGK…ERRALTQRRG (266 aa). Residues 48 to 138 are disordered; it reads DEEETTSAEV…DDKPAQRITE (91 aa). Composition is skewed to basic and acidic residues over residues 64–77, 85–105, and 122–138; these read LDTH…EHDL, RDNK…KDEP, and ARDD…RITE.

The protein belongs to the ZipA family. Interacts with FtsZ via their C-terminal domains.

It is found in the cell inner membrane. In terms of biological role, essential cell division protein that stabilizes the FtsZ protofilaments by cross-linking them and that serves as a cytoplasmic membrane anchor for the Z ring. Also required for the recruitment to the septal ring of downstream cell division proteins. This is Cell division protein ZipA from Pseudomonas syringae pv. tomato (strain ATCC BAA-871 / DC3000).